The following is a 223-amino-acid chain: 2-C-methyl-D-erythritol 4-phosphate cytidylyltransferase (223 aa).

The protein belongs to the IspD/TarI cytidylyltransferase family. IspD subfamily.

The enzyme catalyses 2-C-methyl-D-erythritol 4-phosphate + CTP + H(+) = 4-CDP-2-C-methyl-D-erythritol + diphosphate. The protein operates within isoprenoid biosynthesis; isopentenyl diphosphate biosynthesis via DXP pathway; isopentenyl diphosphate from 1-deoxy-D-xylulose 5-phosphate: step 2/6. Its function is as follows. Catalyzes the formation of 4-diphosphocytidyl-2-C-methyl-D-erythritol from CTP and 2-C-methyl-D-erythritol 4-phosphate (MEP). The sequence is that of 2-C-methyl-D-erythritol 4-phosphate cytidylyltransferase from Prochlorococcus marinus (strain MIT 9215).